The following is an 80-amino-acid chain: Cell division protein ZapB (80 aa).

Residues 3-80 (FEVFEKLEAK…ALLGKMNEVN (78 aa)) adopt a coiled-coil conformation.

The protein belongs to the ZapB family. As to quaternary structure, homodimer. The ends of the coiled-coil dimer bind to each other, forming polymers. Interacts with FtsZ.

Its subcellular location is the cytoplasm. In terms of biological role, non-essential, abundant cell division factor that is required for proper Z-ring formation. It is recruited early to the divisome by direct interaction with FtsZ, stimulating Z-ring assembly and thereby promoting cell division earlier in the cell cycle. Its recruitment to the Z-ring requires functional FtsA or ZipA. The polypeptide is Cell division protein ZapB (Edwardsiella ictaluri (strain 93-146)).